A 520-amino-acid polypeptide reads, in one-letter code: mRNA-capping enzyme subunit beta (520 aa).

The interval 1–185 is disordered; that stretch reads MNVGSILNDD…PQPVFDDQDD (185 aa). Polar residues-rich tracts occupy residues 11-21 and 44-56; these read PPSSGNANGND and ITSMLNDTPSDST. Low complexity predominate over residues 92-108; it reads SSSSVGSSEHSSARSSP. Composition is skewed to basic and acidic residues over residues 126–135 and 149–176; these read PATKTEKKAE and KLEEHENDTNKVEKVVDSAPEPKPKKEP.

It belongs to the fungal TPase family. As to quaternary structure, heterodimer. The mRNA-capping enzyme is composed of two separate chains alpha and beta, respectively a mRNA guanylyltransferase and an mRNA 5'-triphosphate monophosphatase. It depends on Mg(2+) as a cofactor.

It is found in the nucleus. It catalyses the reaction a 5'-end triphospho-ribonucleoside in mRNA + H2O = a 5'-end diphospho-ribonucleoside in mRNA + phosphate + H(+). Its function is as follows. First step of mRNA capping. Converts the 5'-triphosphate end of a nascent mRNA chain into a diphosphate end. The polypeptide is mRNA-capping enzyme subunit beta (CET1) (Candida albicans (strain SC5314 / ATCC MYA-2876) (Yeast)).